The following is a 174-amino-acid chain: Methylated-DNA--protein-cysteine methyltransferase (174 aa).

Catalysis depends on Cys141, which acts as the Nucleophile; methyl group acceptor.

Belongs to the MGMT family.

It is found in the cytoplasm. The enzyme catalyses a 6-O-methyl-2'-deoxyguanosine in DNA + L-cysteinyl-[protein] = S-methyl-L-cysteinyl-[protein] + a 2'-deoxyguanosine in DNA. The catalysed reaction is a 4-O-methyl-thymidine in DNA + L-cysteinyl-[protein] = a thymidine in DNA + S-methyl-L-cysteinyl-[protein]. Involved in the cellular defense against the biological effects of O6-methylguanine (O6-MeG) and O4-methylthymine (O4-MeT) in DNA. Repairs the methylated nucleobase in DNA by stoichiometrically transferring the methyl group to a cysteine residue in the enzyme. This is a suicide reaction: the enzyme is irreversibly inactivated. The chain is Methylated-DNA--protein-cysteine methyltransferase from Thermococcus kodakarensis (strain ATCC BAA-918 / JCM 12380 / KOD1) (Pyrococcus kodakaraensis (strain KOD1)).